A 315-amino-acid chain; its full sequence is Glycine--tRNA ligase alpha subunit (315 aa).

The protein belongs to the class-II aminoacyl-tRNA synthetase family. As to quaternary structure, tetramer of two alpha and two beta subunits.

The protein localises to the cytoplasm. The enzyme catalyses tRNA(Gly) + glycine + ATP = glycyl-tRNA(Gly) + AMP + diphosphate. This chain is Glycine--tRNA ligase alpha subunit, found in Pseudomonas putida (strain GB-1).